A 158-amino-acid polypeptide reads, in one-letter code: SsrA-binding protein (158 aa).

The protein belongs to the SmpB family.

It localises to the cytoplasm. In terms of biological role, required for rescue of stalled ribosomes mediated by trans-translation. Binds to transfer-messenger RNA (tmRNA), required for stable association of tmRNA with ribosomes. tmRNA and SmpB together mimic tRNA shape, replacing the anticodon stem-loop with SmpB. tmRNA is encoded by the ssrA gene; the 2 termini fold to resemble tRNA(Ala) and it encodes a 'tag peptide', a short internal open reading frame. During trans-translation Ala-aminoacylated tmRNA acts like a tRNA, entering the A-site of stalled ribosomes, displacing the stalled mRNA. The ribosome then switches to translate the ORF on the tmRNA; the nascent peptide is terminated with the 'tag peptide' encoded by the tmRNA and targeted for degradation. The ribosome is freed to recommence translation, which seems to be the essential function of trans-translation. The sequence is that of SsrA-binding protein from Roseiflexus castenholzii (strain DSM 13941 / HLO8).